A 212-amino-acid polypeptide reads, in one-letter code: Eukaryotic translation initiation factor 4E-4 (212 aa).

The cysteines at positions 143 and 147 are disulfide-linked.

The protein belongs to the eukaryotic initiation factor 4E family. As to quaternary structure, eIF4F is a multi-subunit complex, the composition of which varies with external and internal environmental conditions. It is composed of at least eIF4A, eIF4E and eIF4G. eIF4E is also known to interact with other partners. Enriched in somatic cells.

Functionally, recognizes and binds the 7-methylguanosine-containing mRNA cap during an early step in the initiation of protein synthesis and facilitates ribosome binding by inducing the unwinding of the mRNAs secondary structures. All 5 eIF4E proteins bind monomethyl cap structures. Only ife-1, ife-2 and ife-5 bind trimethyl cap structures which result from trans-splicing. Translation of trimethyl cap structure mRNAs may be regulated by intracellular redox state; disulfide bonds change the width and depth of the cap-binding cavity determining selectivity to mRNA caps. In Caenorhabditis elegans, this protein is Eukaryotic translation initiation factor 4E-4 (ife-4).